A 117-amino-acid polypeptide reads, in one-letter code: Large ribosomal subunit protein bL20 (117 aa).

It belongs to the bacterial ribosomal protein bL20 family.

Its function is as follows. Binds directly to 23S ribosomal RNA and is necessary for the in vitro assembly process of the 50S ribosomal subunit. It is not involved in the protein synthesizing functions of that subunit. The protein is Large ribosomal subunit protein bL20 of Vibrio metschnikovii.